A 305-amino-acid polypeptide reads, in one-letter code: MVRIVIALGGNALLRNGEPRNYEVQYSHAIETFKIIRDITEKNETVITHGNGPQVGDIQQSHEISGIMANLHQSVAMSQGYIGEILANAYDEVRSKYSLSKSIFTIITRSVVNRNDPAFASPEKPIGRYYSDQEVDEAKRNGWVMKKFKDGWRRVVPSPEPIEILEEKAIEELVREGHIPLAVGGGGIPVVKENGRIVGIDAVIDKDIASSLLAAQLKADYFMILTDVESVYVNFGKPDQKPLGRIHLNEIEKYYAEGQFADGSMKPKVRAAINFVKNGGKAAFITNLENGSAALSGKAGTVIVP.

Belongs to the carbamate kinase family.

The protein resides in the cytoplasm. It catalyses the reaction hydrogencarbonate + NH4(+) + ATP = carbamoyl phosphate + ADP + H2O + H(+). It functions in the pathway metabolic intermediate metabolism; carbamoyl phosphate degradation; CO(2) and NH(3) from carbamoyl phosphate: step 1/1. In Thermoplasma volcanium (strain ATCC 51530 / DSM 4299 / JCM 9571 / NBRC 15438 / GSS1), this protein is Carbamate kinase (arcC).